A 1276-amino-acid polypeptide reads, in one-letter code: Receptor-type guanylate cyclase gcy-28 (1276 aa).

The first 18 residues, Met-1 to Gly-18, serve as a signal peptide directing secretion. Residues Asn-19–His-515 lie on the Extracellular side of the membrane. Residues Asn-87, Asn-196, Asn-338, Asn-384, Asn-387, Asn-414, Asn-428, and Asn-444 are each glycosylated (N-linked (GlcNAc...) asparagine). The helical transmembrane segment at Val-516–Phe-536 threads the bilayer. Topologically, residues Trp-537 to Ala-1276 are cytoplasmic. Disordered regions lie at residues Glu-562–Lys-601 and Ile-635–Leu-709. Positions Asn-567–Asn-577 are enriched in basic residues. Composition is skewed to polar residues over residues Arg-590–Ser-599 and Thr-642–Lys-660. The Protein kinase domain maps to Ser-717–Leu-1013. ATP is bound by residues Phe-723–Val-731 and Lys-756. The stretch at Asn-1017 to Leu-1063 forms a coiled coil. Residues Thr-1086–Glu-1215 enclose the Guanylate cyclase domain. Residues Asp-1091, Ile-1092, and Asp-1135 each contribute to the Mg(2+) site.

It belongs to the adenylyl cyclase class-4/guanylyl cyclase family. As to expression, expressed in head neurons, ventral cord and tail neurons, body wall muscle, hypodermis, somatic gonad and intestine. Isoform d is expressed specifically in AIA interneurons.

It localises to the cell membrane. The protein localises to the cell projection. It is found in the dendrite. Its subcellular location is the axon. The protein resides in the perikaryon. It carries out the reaction GTP = 3',5'-cyclic GMP + diphosphate. Its function is as follows. Guanylate cyclase involved in the production of the second messenger cGMP. Regulates olfactory perception in AWC sensory neurons although may not be involved in the primary sensory transduction steps. Isoforms c: Regulates sensory integration of conflicting sensory cues in AIA interneurons. In terms of biological role, regulates sensory integration of conflicting sensory cues in AIA interneurons. In Caenorhabditis elegans, this protein is Receptor-type guanylate cyclase gcy-28.